We begin with the raw amino-acid sequence, 192 residues long: Peptide deformylase (192 aa).

Cysteine 102 and histidine 145 together coordinate Fe cation. Glutamate 146 is a catalytic residue. Position 149 (histidine 149) interacts with Fe cation.

Belongs to the polypeptide deformylase family. Fe(2+) serves as cofactor.

The enzyme catalyses N-terminal N-formyl-L-methionyl-[peptide] + H2O = N-terminal L-methionyl-[peptide] + formate. In terms of biological role, removes the formyl group from the N-terminal Met of newly synthesized proteins. Requires at least a dipeptide for an efficient rate of reaction. N-terminal L-methionine is a prerequisite for activity but the enzyme has broad specificity at other positions. The polypeptide is Peptide deformylase (Thermus thermophilus (strain ATCC BAA-163 / DSM 7039 / HB27)).